A 606-amino-acid polypeptide reads, in one-letter code: Glucose methanol choline oxidoreductase atC (606 aa).

The signal sequence occupies residues 1–19 (MRVFPTYIAVSGLFGGAFA). Asn43, Asn69, Asn87, Asn290, Asn368, Asn418, Asn421, and Asn552 each carry an N-linked (GlcNAc...) asparagine glycan.

It belongs to the GMC oxidoreductase family.

The catalysed reaction is terremutin + A = terreate + AH2. Its pathway is secondary metabolite biosynthesis. Its function is as follows. Glucose methanol choline oxidoreductase; part of the gene cluster that mediates the biosynthesis of terreic acid, a quinone epoxide inhibitor of Bruton's tyrosine kinase. The first step of the pathway is the synthesis of 6-methylsalicylic acid (6-MSA) by the 6-methylsalicylic acid synthase atX. In the biosynthesis of 6-MSA, atX utilizes one acetyl-CoA and three malonyl-CoAs as its substrates and catalyzes a series of programmed reactions including Claisen condensation, reduction, aldol cyclization, and the hydrolytic cleavage that yields 6-MSA. The 6-methylsalicylate 1-monooxygenase atA then catalyzes the decarboxylative hydroxylation of 6-MSA to 3-methylcatechol. The next step is the conversion of 3-methylcatechol to 3-methyl-1,2,4-benzenetriol by cytochrome P450 monooxygenase atE, which is enhanced by cytochrome P450 monooxygenase atG. Then, the epoxidase atD catalyzes the epoxidation and hydroxyl oxidation of 3-methyl-1,2,4-benzenetriol to terremutin. Lastly, GMC oxidoreductase atC oxidizes terremutin to terreic acid. The chain is Glucose methanol choline oxidoreductase atC from Aspergillus terreus (strain NIH 2624 / FGSC A1156).